The sequence spans 307 residues: PCP degradation transcriptional activation protein (307 aa).

Positions Leu-6–Thr-63 constitute an HTH lysR-type domain. A DNA-binding region (H-T-H motif) is located at residues Ala-23–Ala-42.

The protein belongs to the LysR transcriptional regulatory family.

Its function is as follows. Transcriptional activator for the pcpA, pcpB and pcpE genes for pentachlorophenol (PCP) degradation. Essential for PCP degradation. The polypeptide is PCP degradation transcriptional activation protein (pcpR) (Sphingobium chlorophenolicum).